A 306-amino-acid chain; its full sequence is Agmatinase (306 aa).

Mn(2+)-binding residues include His-126, Asp-149, His-151, Asp-153, Asp-230, and Asp-232.

Belongs to the arginase family. Agmatinase subfamily. Mn(2+) serves as cofactor.

It catalyses the reaction agmatine + H2O = urea + putrescine. The protein operates within amine and polyamine biosynthesis; putrescine biosynthesis via agmatine pathway; putrescine from agmatine: step 1/1. In terms of biological role, catalyzes the formation of putrescine from agmatine. The sequence is that of Agmatinase from Citrobacter koseri (strain ATCC BAA-895 / CDC 4225-83 / SGSC4696).